A 571-amino-acid polypeptide reads, in one-letter code: uncharacterized protein (571 aa).

Residues 1–25 are disordered; it reads MAPSVATSLKAEILPSPRTSSPSSN. Residues 135–389 enclose the FAD-binding FR-type domain; sequence FSVFPAPILD…RGLHKNAFAT (255 aa). Positions 447–479 are disordered; it reads NPLQKSSDDDASSTVSQQTETEMDSFEVKKDGT.

It belongs to the flavoprotein pyridine nucleotide cytochrome reductase family. FAD is required as a cofactor.

This is an uncharacterized protein from Schizosaccharomyces pombe (strain 972 / ATCC 24843) (Fission yeast).